A 127-amino-acid polypeptide reads, in one-letter code: uncharacterized protein (127 aa).

Transmembrane regions (helical) follow at residues 42–62 (LLISNFAGLGIAFIYCLIAFI) and 78–98 (GLPIILCSTLMLVGNILYYFL).

It is found in the membrane. This is an uncharacterized protein from Schizosaccharomyces pombe (strain 972 / ATCC 24843) (Fission yeast).